The primary structure comprises 540 residues: Membrane protein insertase YidC (540 aa).

Residues 6 to 26 form a helical membrane-spanning segment; sequence NILLIALALVSFLLFQQWQVA. The disordered stretch occupies residues 36–63; sequence QAQSSSTLPAPSFADELDPVPGQQQASA. Helical transmembrane passes span 342-362, 417-437, 455-475, and 496-516; these read AFIQ…TFIV, LGGC…YWAL, LSAQ…MFLI, and PVMF…YWLV.

The protein belongs to the OXA1/ALB3/YidC family. Type 1 subfamily. In terms of assembly, interacts with the Sec translocase complex via SecD. Specifically interacts with transmembrane segments of nascent integral membrane proteins during membrane integration.

The protein localises to the cell inner membrane. Functionally, required for the insertion and/or proper folding and/or complex formation of integral membrane proteins into the membrane. Involved in integration of membrane proteins that insert both dependently and independently of the Sec translocase complex, as well as at least some lipoproteins. Aids folding of multispanning membrane proteins. In Vibrio campbellii (strain ATCC BAA-1116), this protein is Membrane protein insertase YidC.